The sequence spans 658 residues: Putative phospholipase B-like lamina ancestor (658 aa).

A signal peptide spans 1–29; that stretch reads MLKVVGASWQKTRIGTYILIGAGLLVIGA. Residues N229, N465, and N486 are each glycosylated (N-linked (GlcNAc...) asparagine).

The protein belongs to the phospholipase B-like family. Expressed in neural and glial progenitors prior to, but not after, differentiation. Not expressed in late third instar disks, but is expressed uniformly by early third instar disks, in the imaginal ring of the proventriculus and in the salivary gland.

It is found in the secreted. Functionally, putative phospholipase. Involved in the regulation of cellular plasticity in imaginal disks. This Drosophila melanogaster (Fruit fly) protein is Putative phospholipase B-like lamina ancestor (lama).